The following is a 240-amino-acid chain: Uridylate kinase (240 aa).

13-16 contributes to the ATP binding site; the sequence is KASG. G55 is a binding site for UMP. ATP is bound by residues G56 and R60. Residues D75 and 136–143 contribute to the UMP site; that span reads TGNPFFTT. The ATP site is built by T163, Q164, Y169, and D172.

This sequence belongs to the UMP kinase family. In terms of assembly, homohexamer.

It is found in the cytoplasm. It carries out the reaction UMP + ATP = UDP + ADP. The protein operates within pyrimidine metabolism; CTP biosynthesis via de novo pathway; UDP from UMP (UMPK route): step 1/1. Inhibited by UTP. In terms of biological role, catalyzes the reversible phosphorylation of UMP to UDP. The polypeptide is Uridylate kinase (Mesorhizobium japonicum (strain LMG 29417 / CECT 9101 / MAFF 303099) (Mesorhizobium loti (strain MAFF 303099))).